The primary structure comprises 387 residues: Sulfoacetaldehyde reductase (387 aa).

It belongs to the iron-containing alcohol dehydrogenase family.

It catalyses the reaction 2-hydroxyethane-1-sulfonate + NAD(+) = sulfoacetaldehyde + NADH + H(+). It functions in the pathway organosulfur degradation; alkanesulfonate degradation. Involved in an anaerobic respiration pathway that converts the sulfonate taurine (2-aminoethanesulfonate) to ammonia, acetate and sulfide. Catalyzes the NADH-dependent reduction of sulfoacetaldehyde to 2-hydroxyethane-1-sulfonate (isethionate). Does not accept acetaldehyde as a substrate. The chain is Sulfoacetaldehyde reductase from Bilophila wadsworthia (strain 3_1_6).